A 323-amino-acid chain; its full sequence is Pathogenicity locus probable regulatory protein WtsA (323 aa).

The region spanning 41-251 (VAPLEIDLVL…ELKTAAKRFT (211 aa)) is the Sigma-54 factor interaction domain. ATP contacts are provided by residues 52–59 (GETGTGKD) and 123–132 (EIDSMPLSLQ). Residues 293–312 (IDEAAMELGMPLRTLYHRIK) constitute a DNA-binding region (H-T-H motif).

Positive activator of wtsB involved in plant pathogenicity. Probably interacts with sigma-54. In Pantoea stewartii subsp. stewartii (Erwinia stewartii), this protein is Pathogenicity locus probable regulatory protein WtsA (wtsA).